Reading from the N-terminus, the 68-residue chain is Large ribosomal subunit protein uL29 (68 aa).

It belongs to the universal ribosomal protein uL29 family.

This chain is Large ribosomal subunit protein uL29, found in Wigglesworthia glossinidia brevipalpis.